The following is a 260-amino-acid chain: Methanethiol S-methyltransferase (260 aa).

5 consecutive transmembrane segments (helical) span residues 27 to 47, 55 to 75, 107 to 127, 134 to 154, and 196 to 216; these read CYLFFLLTALYLIGFLAGIGV, PGITWPLAVLVDAILITLFAA, CLVLALLFVLWQPIATPVWNV, GLLIALFWLGWGIVLLATFLI, and FLIAFWATPDMTAGHLLFAIL.

This sequence belongs to the nurim family.

The protein localises to the membrane. It catalyses the reaction methanethiol + S-adenosyl-L-methionine = dimethyl sulfide + S-adenosyl-L-homocysteine + H(+). Its function is as follows. Catalyzes the methylation of methanethiol (MeSH) to yield dimethylsulphide (DMS). In Pseudomonas sp. (strain GM41(2012)), this protein is Methanethiol S-methyltransferase.